Consider the following 110-residue polypeptide: Small ubiquitin-related modifier 3 (110 aa).

Glycyl lysine isopeptide (Lys-Gly) (interchain with G-Cter in SUMO2) cross-links involve residues Lys-5 and Lys-7. Residue Lys-11 forms a Glycyl lysine isopeptide (Lys-Gly) (interchain with G-Cter in SUMO); alternate linkage. Lys-11 is covalently cross-linked (Glycyl lysine isopeptide (Lys-Gly) (interchain with G-Cter in SUMO2); alternate). The Ubiquitin-like domain maps to 15–92; sequence DHINLKVAGQ…IDVFQQQTGG (78 aa). Positions 89–101 are enriched in polar residues; it reads QTGGTASRASVPT. Positions 89-110 are disordered; sequence QTGGTASRASVPTPSHFPDICY. Residue Gly-92 forms a Glycyl lysine isopeptide (Gly-Lys) (interchain with K-? in acceptor proteins) linkage. Positions 93-110 are excised as a propeptide; that stretch reads TASRASVPTPSHFPDICY.

The protein belongs to the ubiquitin family. SUMO subfamily. In terms of assembly, interacts with SAE2 and UBE2I. Covalently attached to a number of proteins. Interacts with USP25 (via ts SIM domain); the interaction sumoylates USP25 and inhibits its ubiquitin hydrolyzing activity. Interacts with BMAL1. In terms of processing, polymeric chains can be formed through Lys-11 cross-linking. Cleavage of precursor form by SENP1, SENP2 or SENP5 is necessary for function.

The protein localises to the cytoplasm. Its subcellular location is the nucleus. It is found in the PML body. Its function is as follows. Ubiquitin-like protein which can be covalently attached to target lysines either as a monomer or as a lysine-linked polymer. Does not seem to be involved in protein degradation and may function as an antagonist of ubiquitin in the degradation process. Plays a role in a number of cellular processes such as nuclear transport, DNA replication and repair, mitosis and signal transduction. Covalent attachment to its substrates requires prior activation by the E1 complex SAE1-SAE2 and linkage to the E2 enzyme UBE2I, and can be promoted by an E3 ligase such as PIAS1-4, RANBP2 or CBX4. Plays a role in the regulation of sumoylation status of SETX. The protein is Small ubiquitin-related modifier 3 (Sumo3) of Rattus norvegicus (Rat).